A 357-amino-acid chain; its full sequence is Dehydrogenase FUB6 (357 aa).

The segment covering 1-17 (MGGEVSNKTWVFKQSPS) has biased composition (polar residues). The disordered stretch occupies residues 1-22 (MGGEVSNKTWVFKQSPSGLPEP).

The protein belongs to the zinc-containing alcohol dehydrogenase family. Quinone oxidoreductase subfamily.

Its pathway is mycotoxin biosynthesis. In terms of biological role, dehydrogenase; part of the gene cluster that mediates the biosynthesis of fusaric acid, a mycotoxin with low to moderate toxicity to animals and humans, but with high phytotoxic properties. L-aspartate is suggested as fusaric acid amino acid precursor that is activated and further processed to O-acetyl-L-homoserine by cluster enzymes aspartate kinase FUB3 and homoserine O-acetyltransferase FUB5, as well as enzymes of the primary metabolism. The polyketide synthase (PKS) FUB1 generates the triketide trans-2-hexenal which is presumptively released by the hydrolase FUB4 and linked to the NRPS-bound amino acid precursor by NAD(P)-dependent dehydrogenase FUB6. FUB1, FUB4, and the non-canonical NRPS Fub8 may form an enzyme complex. Further processing of the NRPS-bound intermediate might be carried out by FUB6 and the O-acetylhomoserine FUB7, enabling a spontaneous electrocyclization to close the carbon backbone of fusaric acid. Dihydrofusaric acid is likely to be released via reduction by the thioester reductase (TR) domain of FUB8 whereupon the final oxidation to fusaric acid may (also) be performed by the FMN-dependent dehydrogenase FUB9. This chain is Dehydrogenase FUB6, found in Fusarium oxysporum f. sp. lycopersici (strain 4287 / CBS 123668 / FGSC 9935 / NRRL 34936) (Fusarium vascular wilt of tomato).